The sequence spans 590 residues: Probable lysosomal cobalamin transporter (590 aa).

Transmembrane regions (helical) follow at residues 8–28 (LIWV…SIFI), 46–66 (IFTL…VALV), 94–114 (AVAY…VVPF), 145–165 (TVAF…VPIG), 190–210 (ALTF…VLYT), 314–334 (LLSG…MLLT), 348–367 (CGYI…VFVH), 376–396 (YILF…GIAT), 421–441 (ITTV…SMVV), and 508–528 (FFGI…LLVF). The interval 567 to 590 (WEDITGRASRSPQVSGSAGRGTRE) is disordered.

Belongs to the LIMR family. LMBRD1 subfamily.

Its subcellular location is the lysosome membrane. In terms of biological role, probable lysosomal cobalamin transporter. Required to export cobalamin from lysosomes allowing its conversion to cofactors. In Ajellomyces capsulatus (strain NAm1 / WU24) (Darling's disease fungus), this protein is Probable lysosomal cobalamin transporter.